Consider the following 474-residue polypeptide: tRNA-2-methylthio-N(6)-dimethylallyladenosine synthase (474 aa).

An MTTase N-terminal domain is found at 3–120; it reads KKLHIKTWGC…LPEMINQVKG (118 aa). [4Fe-4S] cluster is bound by residues C12, C49, C83, C157, C161, and C164. The region spanning 143-375 is the Radical SAM core domain; sequence RAEGPTAFVS…QERINQQAMA (233 aa). The TRAM domain maps to 378–441; it reads RRMLGTTQRI…PNSLRGKVIR (64 aa).

This sequence belongs to the methylthiotransferase family. MiaB subfamily. In terms of assembly, monomer. [4Fe-4S] cluster serves as cofactor.

The protein localises to the cytoplasm. The catalysed reaction is N(6)-dimethylallyladenosine(37) in tRNA + (sulfur carrier)-SH + AH2 + 2 S-adenosyl-L-methionine = 2-methylsulfanyl-N(6)-dimethylallyladenosine(37) in tRNA + (sulfur carrier)-H + 5'-deoxyadenosine + L-methionine + A + S-adenosyl-L-homocysteine + 2 H(+). Its function is as follows. Catalyzes the methylthiolation of N6-(dimethylallyl)adenosine (i(6)A), leading to the formation of 2-methylthio-N6-(dimethylallyl)adenosine (ms(2)i(6)A) at position 37 in tRNAs that read codons beginning with uridine. In Cronobacter sakazakii (strain ATCC BAA-894) (Enterobacter sakazakii), this protein is tRNA-2-methylthio-N(6)-dimethylallyladenosine synthase.